The chain runs to 514 residues: Bifunctional purine biosynthesis protein PurH (514 aa).

Positions 1–143 (MTRRALISVS…KNHAGVLVLV (143 aa)) constitute an MGS-like domain.

This sequence belongs to the PurH family.

It carries out the reaction (6R)-10-formyltetrahydrofolate + 5-amino-1-(5-phospho-beta-D-ribosyl)imidazole-4-carboxamide = 5-formamido-1-(5-phospho-D-ribosyl)imidazole-4-carboxamide + (6S)-5,6,7,8-tetrahydrofolate. The enzyme catalyses IMP + H2O = 5-formamido-1-(5-phospho-D-ribosyl)imidazole-4-carboxamide. The protein operates within purine metabolism; IMP biosynthesis via de novo pathway; 5-formamido-1-(5-phospho-D-ribosyl)imidazole-4-carboxamide from 5-amino-1-(5-phospho-D-ribosyl)imidazole-4-carboxamide (10-formyl THF route): step 1/1. It functions in the pathway purine metabolism; IMP biosynthesis via de novo pathway; IMP from 5-formamido-1-(5-phospho-D-ribosyl)imidazole-4-carboxamide: step 1/1. The chain is Bifunctional purine biosynthesis protein PurH from Deinococcus geothermalis (strain DSM 11300 / CIP 105573 / AG-3a).